Reading from the N-terminus, the 231-residue chain is UMP-CMP kinase (231 aa).

ATP is bound at residue G57–T62. Residues S77–V106 are NMP. Residues R83, K104–V106, and G131–R134 contribute to the a ribonucleoside 5'-phosphate site. N138 serves as a coordination point for CMP. The interval N169–D177 is LID. ATP is bound at residue R170. The a ribonucleoside 5'-phosphate site is built by R174 and R185. G213 is a binding site for ATP.

This sequence belongs to the adenylate kinase family. UMP-CMP kinase subfamily. Monomer. It depends on Mg(2+) as a cofactor.

It is found in the cytoplasm. The protein localises to the nucleus. The enzyme catalyses CMP + ATP = CDP + ADP. It catalyses the reaction dCMP + ATP = dCDP + ADP. The catalysed reaction is UMP + ATP = UDP + ADP. In terms of biological role, catalyzes the phosphorylation of pyrimidine nucleoside monophosphates at the expense of ATP. Plays an important role in de novo pyrimidine nucleotide biosynthesis. Has preference for UMP and CMP as phosphate acceptors. This Prunus armeniaca (Apricot) protein is UMP-CMP kinase.